A 753-amino-acid chain; its full sequence is MFKLFSAFRKDKVWDFNGGIHPPEMKTQSNGTPLRQVSLPQRLIIPLKQHIGAEGELCVKVGDRVLRGQPLTRGWGRMLPVHAPTSGTVTAIAPHTTAHPSGLAEMSVIIDADGEDRWIERDGWSDYQLRTREALIERIHQFGVAGLGGAGFPTGSKLRGGSDKIKTLIINAAECEPYITADDRLMQDCAAQIVDGIRILAHILQPDEVLIGIEDNKPQAISMLRAVLCDAHGISLRVIPTKYPSGGAKQLTQILTGKQVPHGGRSSDIGVLMQNVGTAYAIKRAVIDGEPLTERVVTLTGEAVSRPGNVWARLGTPVRHLLNDAGFCASAEPMVIMGGPLMGFTLPGLDVPVVKITNCLLAPSASEMGEPQEEKGCIRCSACADACPADLLPQQLYWFSKGQQHDKATAHNLADCIECGACAWVCPSNIPLVQYFRQEKAEISAIRQEEQRAAEAKARFEARQARLEREKAARAERHKKAAVQPAAKDQDAINAALARVRDKQRDAAQPIVIQSGAKPDNSEAIAAREARKAEARARKAQQQAASVETPSTDAADPRKAAVEAAIARAKARKAEQQAAPVEAPVAEPVDPRKAAVEAAIARAKARKAEQQVAPVEAPVAEPVDPRKAAVEAAIARAKARKAEQQVAPVEAPVAEPVDPRKAAVEAAIARAKARKAEQQAAPVEAPVAEPVDPRKAAVEAAIARAKARKAEQQAAQPDLASAAANDDPRKAAVAAAIARVQARKATQQAVNEE.

2 4Fe-4S ferredoxin-type domains span residues 367–397 (EMGE…QQLY) and 407–436 (KATA…VQYF). Positions 377, 380, 383, 387, 416, 419, 422, and 426 each coordinate [4Fe-4S] cluster. Disordered regions lie at residues 517-561 (AKPD…RKAA), 606-625 (RKAE…PVDP), 640-659 (RKAE…PVDP), and 705-735 (AKAR…AVAA). Residues 526–537 (AAREARKAEARA) show a composition bias toward basic and acidic residues. Composition is skewed to low complexity over residues 610–622 (QQVA…VAEP), 644–656 (QQVA…VAEP), and 712–735 (QQAA…AVAA).

The protein belongs to the 4Fe4S bacterial-type ferredoxin family. RnfC subfamily. In terms of assembly, the complex is composed of six subunits: RnfA, RnfB, RnfC, RnfD, RnfE and RnfG. It depends on [4Fe-4S] cluster as a cofactor.

Its subcellular location is the cell inner membrane. In terms of biological role, part of a membrane-bound complex that couples electron transfer with translocation of ions across the membrane. This chain is Ion-translocating oxidoreductase complex subunit C, found in Klebsiella pneumoniae (strain 342).